The sequence spans 373 residues: Peroxisomal biogenesis factor 3 (373 aa).

At methionine 1–lysine 15 the chain is on the cytoplasmic side. The tract at residues methionine 1–alanine 45 is targeting to peroxisomes. A helical membrane pass occupies residues cysteine 16–lysine 36. The Peroxisomal portion of the chain corresponds to isoleucine 37–threonine 116. A helical transmembrane segment spans residues valine 117 to isoleucine 140. Residues tyrosine 120–isoleucine 136 are interaction with PEX19. The Cytoplasmic segment spans residues tyrosine 141–lysine 373.

This sequence belongs to the peroxin-3 family. As to quaternary structure, interacts with PEX19. As to expression, found in all examined tissues.

The protein localises to the peroxisome membrane. In terms of biological role, involved in peroxisome biosynthesis and integrity. Assembles membrane vesicles before the matrix proteins are translocated. As a docking factor for PEX19, is necessary for the import of peroxisomal membrane proteins in the peroxisomes. The protein is Peroxisomal biogenesis factor 3 (PEX3) of Homo sapiens (Human).